Consider the following 443-residue polypeptide: Mevalonate kinase (443 aa).

Residues Lys12, Ser138, and 143–149 (GAGLGSS) each bind ATP. Ser149 and Glu191 together coordinate Mg(2+). The active-site Proton acceptor is the Asp202.

It belongs to the GHMP kinase family. Mevalonate kinase subfamily. As to quaternary structure, homodimer. Requires Mg(2+) as cofactor.

It is found in the cytoplasm. It localises to the cytosol. The enzyme catalyses (R)-mevalonate + ATP = (R)-5-phosphomevalonate + ADP + H(+). It functions in the pathway isoprenoid biosynthesis; isopentenyl diphosphate biosynthesis via mevalonate pathway; isopentenyl diphosphate from (R)-mevalonate: step 1/3. Its activity is regulated as follows. Farnesyl pyrophosphate and geranyl pyrophosphate inhibit mevalonate kinase by binding competitively at the ATP-binding site. Functionally, mevalonate kinase; part of the second module of ergosterol biosynthesis pathway that includes the middle steps of the pathway. ERG12 converts mevalonate into 5-phosphomevalonate. The second module is carried out in the vacuole and involves the formation of farnesyl diphosphate, which is also an important intermediate in the biosynthesis of ubiquinone, dolichol, heme and prenylated proteins. Activity by the mevalonate kinase ERG12 first converts mevalonate into 5-phosphomevalonate. 5-phosphomevalonate is then further converted to 5-diphosphomevalonate by the phosphomevalonate kinase ERG8. The diphosphomevalonate decarboxylase MVD1/ERG19 then produces isopentenyl diphosphate. The isopentenyl-diphosphate delta-isomerase IDI1 then catalyzes the 1,3-allylic rearrangement of the homoallylic substrate isopentenyl (IPP) to its highly electrophilic allylic isomer, dimethylallyl diphosphate (DMAPP). Finally the farnesyl diphosphate synthase ERG20 catalyzes the sequential condensation of isopentenyl pyrophosphate with dimethylallyl pyrophosphate, and then with the resultant geranylpyrophosphate to the ultimate product farnesyl pyrophosphate. The sequence is that of Mevalonate kinase from Saccharomyces cerevisiae (strain ATCC 204508 / S288c) (Baker's yeast).